Consider the following 353-residue polypeptide: UPF0283 membrane protein YcjF (353 aa).

Over residues 1-19 (MSEPLKPRIDFAEPLKEES) the composition is skewed to basic and acidic residues. Positions 1–29 (MSEPLKPRIDFAEPLKEESTSTFKAQQTF) are disordered. The segment covering 20–29 (TSTFKAQQTF) has biased composition (polar residues). 3 helical membrane-spanning segments follow: residues 70 to 90 (MVLG…IQWT), 100 to 120 (AALG…GSVI), and 213 to 233 (ESTL…FIAW).

The protein belongs to the UPF0283 family.

Its subcellular location is the cell inner membrane. This chain is UPF0283 membrane protein YcjF, found in Salmonella arizonae (strain ATCC BAA-731 / CDC346-86 / RSK2980).